Here is a 66-residue protein sequence, read N- to C-terminus: MKRKDTLKDYRGKSIDQLQEVKIELLQQLFSLRMQKGTGQLKKNHLFKSAKRDIARINTIISEKNK.

Belongs to the universal ribosomal protein uL29 family.

The polypeptide is Large ribosomal subunit protein uL29 (Francisella tularensis subsp. holarctica (strain LVS)).